An 861-amino-acid polypeptide reads, in one-letter code: MISEENFQQHTPMMQQYLKLKAENPDTLLFYRMGDFYELFYDDAKKAAALLDISLTKRGQSAGQPIPMAGMPYHAVEGYLAKLVQLGESVAICEQIGDPATSKGPVERQIVRIVTPGTVSDEALLPERQDNLIAAVYQEKEKFGLATLDMTSGRFQLCEPADKETLRAELQRIVPVELLYCEEFNEMAAIEHCKGLRRRPIWEFELSTAITLLNRQFGTKDLRAFGVEKSPLGLSAAGCLLQYAKETQRTALPHIQSISLIQNQDCIQLDAATRRNLELTQNLSGGTENTLASVLDKCVTPMGSRLLKRWIHQPIRDVEKLKQRQQAIAEILNFDLVDELQPYLQLVGDMERILARVALRSARPRDLTRLRTALEQIPALRTIVQQKTPPFLTALFSQIADFSEQCDLLQRALIETPPLLIRDGGVIAEGYNTELDEWRMLSDGATQYLENLEKRERESTGIDTLKIGFNAVHGYYIQISQGQAHKAPIHYVRRQTLKNAERYIIPELKEYEDKVLKSKGAALALEKQLYDELFDLLLPHLGALQLASLALSELDVLVNLAERADTLNYVMPTFCDEVSVKIENGRHPVVEQVLKDPFIANPVELNHNRHLLIITGPNMGGKSTYMRQTALITLLAYIGSFVPADSARIGPIDRIFTRIGASDDLASGRSTFMVEMTEMANILHQATEQSLVLIDEIGRGTSTYDGLSLAWACAEWLAKKIRSLTLFATHYFELTALPEQLEGIVNIHLDALEHNNSIAFMHAVQDGAASKSYGLAVAALAGVPQSVIKLAKQKLTQLEKNSSHSADQQIQALREANHNQGELLFEQETDALREAIEKLDPDDLSPKQALAYLYQLKKMVG.

G616–S623 contacts ATP.

It belongs to the DNA mismatch repair MutS family.

In terms of biological role, this protein is involved in the repair of mismatches in DNA. It is possible that it carries out the mismatch recognition step. This protein has a weak ATPase activity. The sequence is that of DNA mismatch repair protein MutS from Haemophilus influenzae (strain PittEE).